Here is a 68-residue protein sequence, read N- to C-terminus: uncharacterized protein (68 aa).

This is an uncharacterized protein from Rickettsia prowazekii (strain Madrid E).